The following is a 127-amino-acid chain: Large ribosomal subunit protein eL22x (127 aa).

It belongs to the eukaryotic ribosomal protein eL22 family.

The polypeptide is Large ribosomal subunit protein eL22x (RPL22A) (Arabidopsis thaliana (Mouse-ear cress)).